The chain runs to 323 residues: Aldo-keto reductase family 1 member C2 (323 aa).

NADP(+)-binding positions include Gly-20–Tyr-24 and Asp-50. Tyr-24 contributes to the substrate binding site. Tyr-55 acts as the Proton donor in catalysis. Position 117 (His-117) interacts with substrate. NADP(+) is bound by residues Ser-166–Asn-167, Gln-190, and Tyr-216–His-222. Substrate is bound by residues His-222 and Trp-227. Lys-270 to Asn-280 provides a ligand contact to NADP(+).

The protein belongs to the aldo/keto reductase family. Expressed in fetal testes. Expressed in fetal and adult adrenal glands.

It is found in the cytoplasm. Its subcellular location is the cytosol. It catalyses the reaction a 3alpha-hydroxysteroid + NADP(+) = a 3-oxosteroid + NADPH + H(+). The enzyme catalyses a 3alpha-hydroxysteroid + NAD(+) = a 3-oxosteroid + NADH + H(+). The catalysed reaction is 5alpha-androstane-3alpha,17beta-diol + NADP(+) = 17beta-hydroxy-5alpha-androstan-3-one + NADPH + H(+). It carries out the reaction 5alpha-androstane-3alpha,17beta-diol + NAD(+) = 17beta-hydroxy-5alpha-androstan-3-one + NADH + H(+). It catalyses the reaction 5alpha-androstane-3alpha,17beta-diol + NAD(+) = androsterone + NADH + H(+). The enzyme catalyses 17beta-estradiol + NADP(+) = estrone + NADPH + H(+). The catalysed reaction is 17beta-estradiol + NAD(+) = estrone + NADH + H(+). It carries out the reaction (20S)-hydroxypregn-4-en-3-one + NADP(+) = progesterone + NADPH + H(+). It catalyses the reaction (20S)-hydroxypregn-4-en-3-one + NAD(+) = progesterone + NADH + H(+). The enzyme catalyses androsterone + NADP(+) = 5alpha-androstan-3,17-dione + NADPH + H(+). The catalysed reaction is (3beta,5alpha,17beta)-3-hydroxy-androstan-17-yl sulfate + NADP(+) = 5alpha-dihydrotestosterone sulfate + NADPH + H(+). It carries out the reaction (1R,2R)-1,2-dihydrobenzene-1,2-diol + NADP(+) = catechol + NADPH + H(+). It catalyses the reaction (S)-indan-1-ol + NAD(+) = indan-1-one + NADH + H(+). The enzyme catalyses (S)-indan-1-ol + NADP(+) = indan-1-one + NADPH + H(+). The protein operates within steroid metabolism. With respect to regulation, inhibited by hexestrol with an IC(50) of 2.8 uM, 1,10-phenanthroline with an IC(50) of 2100 uM, 1,7-phenanthroline with an IC(50) of 1500 uM, flufenamic acid with an IC(50) of 0.9 uM, indomethacin with an IC(50) of 75 uM, ibuprofen with an IC(50) of 6.9 uM, lithocholic acid with an IC(50) of 0.07 uM, ursodeoxycholic acid with an IC(50) of 0.08 uM and chenodeoxycholic acid with an IC(50) of 0.13 uM. The oxidation reaction is inhibited by low micromolar concentrations of NADPH. Cytosolic aldo-keto reductase that catalyzes the NADH and NADPH-dependent reduction of ketosteroids to hydroxysteroids. Most probably acts as a reductase in vivo since the oxidase activity measured in vitro is inhibited by physiological concentrations of NADPH. Displays a broad positional specificity acting on positions 3, 17 and 20 of steroids and regulates the metabolism of hormones like estrogens and androgens. Works in concert with the 5-alpha/5-beta-steroid reductases to convert steroid hormones into the 3-alpha/5-alpha and 3-alpha/5-beta-tetrahydrosteroids. Catalyzes the inactivation of the most potent androgen 5-alpha-dihydrotestosterone (5-alpha-DHT) to 5-alpha-androstane-3-alpha,17-beta-diol (3-alpha-diol). Also specifically able to produce 17beta-hydroxy-5alpha-androstan-3-one/5alphaDHT. May also reduce conjugated steroids such as 5alpha-dihydrotestosterone sulfate. Displays affinity for bile acids. This Homo sapiens (Human) protein is Aldo-keto reductase family 1 member C2 (AKR1C2).